Here is a 129-residue protein sequence, read N- to C-terminus: D-ribose pyranase (129 aa).

The Proton donor role is filled by His20. Residues Asp28, His96, and 118-120 contribute to the substrate site; that span reads YAN.

The protein belongs to the RbsD / FucU family. RbsD subfamily. Homodecamer.

The protein localises to the cytoplasm. It carries out the reaction beta-D-ribopyranose = beta-D-ribofuranose. It functions in the pathway carbohydrate metabolism; D-ribose degradation; D-ribose 5-phosphate from beta-D-ribopyranose: step 1/2. Its function is as follows. Catalyzes the interconversion of beta-pyran and beta-furan forms of D-ribose. This Streptomyces coelicolor (strain ATCC BAA-471 / A3(2) / M145) protein is D-ribose pyranase.